A 500-amino-acid polypeptide reads, in one-letter code: Galactose/methyl galactoside import ATP-binding protein MglA (500 aa).

2 ABC transporter domains span residues 8 to 243 and 257 to 500; these read LEME…VGRD and EMIL…AKYL. 40 to 47 lines the ATP pocket; the sequence is GENGAGKS.

The protein belongs to the ABC transporter superfamily. Galactose/methyl galactoside importer (TC 3.A.1.2.3) family. As to quaternary structure, the complex is composed of one ATP-binding protein (MglA), two transmembrane proteins (MglC) and a solute-binding protein (MglB).

The protein resides in the cell inner membrane. The enzyme catalyses D-galactose(out) + ATP + H2O = D-galactose(in) + ADP + phosphate + H(+). The catalysed reaction is methyl beta-D-galactoside(out) + ATP + H2O = methyl beta-D-galactoside(in) + ADP + phosphate + H(+). Part of the ABC transporter complex MglABC involved in galactose/methyl galactoside import. Responsible for energy coupling to the transport system. In Fusobacterium nucleatum subsp. nucleatum (strain ATCC 25586 / DSM 15643 / BCRC 10681 / CIP 101130 / JCM 8532 / KCTC 2640 / LMG 13131 / VPI 4355), this protein is Galactose/methyl galactoside import ATP-binding protein MglA.